The following is a 299-amino-acid chain: tRNA-cytidine(32) 2-sulfurtransferase (299 aa).

The PP-loop motif motif lies at 56–61 (SGGKDS). Positions 131, 134, and 222 each coordinate [4Fe-4S] cluster.

It belongs to the TtcA family. In terms of assembly, homodimer. It depends on Mg(2+) as a cofactor. The cofactor is [4Fe-4S] cluster.

It is found in the cytoplasm. It carries out the reaction cytidine(32) in tRNA + S-sulfanyl-L-cysteinyl-[cysteine desulfurase] + AH2 + ATP = 2-thiocytidine(32) in tRNA + L-cysteinyl-[cysteine desulfurase] + A + AMP + diphosphate + H(+). The protein operates within tRNA modification. Its function is as follows. Catalyzes the ATP-dependent 2-thiolation of cytidine in position 32 of tRNA, to form 2-thiocytidine (s(2)C32). The sulfur atoms are provided by the cysteine/cysteine desulfurase (IscS) system. The sequence is that of tRNA-cytidine(32) 2-sulfurtransferase from Xylella fastidiosa (strain M23).